The following is a 345-amino-acid chain: MTDLTTFHLPERITNTEAHRELGQAMVKAWRTDGIFQITLSKPQEQTTDEAFAESRQFFSQDFETKSRHVSALTYSGYIASREEVTAGEADYSEIFTICPDIGLEDARVRENLPCHGPVPWPGAAYRDRMKAFMGMLGTFGERLLQLIALGLDLDDMDTFTRLTQDGWHHMRVLRFPTVQSSENARGIGAHTDYGMLVIAAQDDVGGLYVRPPIEGERRNRNWLPSESTAGVYEHDDGWNFIKPMPAVLTVFPGDFLQFLTGGHLLSTPHKVRLNTRERFAMAYFHEPNFDAWVEPLEADAAVAPIHYGTHFTNMFMRCYPKRITTRRIMENGLLDKLPTLSELA.

The Fe2OG dioxygenase domain occupies 167-288 (GWHHMRVLRF…RFAMAYFHEP (122 aa)). Residues H191 and H270 each contribute to the Fe cation site.

It belongs to the iron/ascorbate-dependent oxidoreductase family. In terms of assembly, monomer. Fe(2+) serves as cofactor.

It carries out the reaction 2-oxoglutarate + O2 + 2 H(+) = ethene + 3 CO2 + H2O. It catalyses the reaction L-arginine + 2-oxoglutarate + O2 = guanidine + L-glutamate 5-semialdehyde + succinate + CO2. Its pathway is alkene biosynthesis; ethylene biosynthesis via 2-oxoglutarate. Functionally, simultaneously catalyzes two reactions, namely formation of ethylene and of succinate from 2-oxoglutarate. This chain is 2-oxoglutarate-dependent ethylene/succinate-forming enzyme (efe), found in Ralstonia nicotianae (strain ATCC BAA-1114 / GMI1000) (Ralstonia solanacearum).